The chain runs to 578 residues: Putative multidrug export ATP-binding/permease protein SA1683 (578 aa).

The Cytoplasmic portion of the chain corresponds to 1-15 (MIKRYLQFVKPYKYR). A helical transmembrane segment spans residues 16 to 36 (IFATIIVGIIKFGIPMLIPLL). The ABC transmembrane type-1 domain occupies 16-306 (IFATIIVGII…LVASFTTLTQ (291 aa)). Topologically, residues 37–59 (IKYAIDGVINNHALTTDEKVHHL) are extracellular. Residues 60–80 (TIAIGIALFIFVIVRPPIEFI) form a helical membrane-spanning segment. Topologically, residues 81 to 138 (RQYLAQWTSNKILYDIRKKLYNHLQALSARFYANNQVGQVISRVINDVEQTKDFILTG) are cytoplasmic. Residues 139–159 (LMNIWLDCITIIIALSIMFFL) form a helical membrane-spanning segment. The Extracellular segment spans residues 160-162 (DVK). The chain crosses the membrane as a helical span at residues 163–183 (LTLAALFIFPFYILTVYVFFG). Over 184–244 (RLRKLTRERS…TRALKHTRWN (61 aa)) the chain is Cytoplasmic. A helical membrane pass occupies residues 245 to 263 (AYSFAAINTVTDIGPIIVI). The Extracellular portion of the chain corresponds to 264 to 269 (GVGAYL). Residues 270-287 (AISGSITVGTLAAFVGYL) traverse the membrane as a helical segment. Over 288–578 (ELLFGPLRRL…YEHLYSIQNL (291 aa)) the chain is Cytoplasmic. Positions 340–575 (IDIDHVSFQY…QGAYEHLYSI (236 aa)) constitute an ABC transporter domain. Residue 374 to 381 (GMSGGGKS) participates in ATP binding.

Belongs to the ABC transporter superfamily. As to quaternary structure, homodimer.

It is found in the cell membrane. May be involved in multidrug export. Transmembrane domains (TMD) form a pore in the cell membrane and the ATP-binding domain (NBD) is responsible for energy generation. In Staphylococcus aureus (strain N315), this protein is Putative multidrug export ATP-binding/permease protein SA1683.